Here is a 327-residue protein sequence, read N- to C-terminus: Phenylalanine--tRNA ligase alpha subunit (327 aa).

Residue Glu-252 participates in Mg(2+) binding.

It belongs to the class-II aminoacyl-tRNA synthetase family. Phe-tRNA synthetase alpha subunit type 1 subfamily. Tetramer of two alpha and two beta subunits. It depends on Mg(2+) as a cofactor.

It localises to the cytoplasm. It catalyses the reaction tRNA(Phe) + L-phenylalanine + ATP = L-phenylalanyl-tRNA(Phe) + AMP + diphosphate + H(+). This chain is Phenylalanine--tRNA ligase alpha subunit, found in Vibrio cholerae serotype O1 (strain ATCC 39541 / Classical Ogawa 395 / O395).